The following is a 304-amino-acid chain: Ribosomal RNA large subunit methyltransferase F (304 aa).

It belongs to the methyltransferase superfamily. METTL16/RlmF family.

It localises to the cytoplasm. The catalysed reaction is adenosine(1618) in 23S rRNA + S-adenosyl-L-methionine = N(6)-methyladenosine(1618) in 23S rRNA + S-adenosyl-L-homocysteine + H(+). Functionally, specifically methylates the adenine in position 1618 of 23S rRNA. In Klebsiella pneumoniae (strain 342), this protein is Ribosomal RNA large subunit methyltransferase F.